Reading from the N-terminus, the 147-residue chain is Small ribosomal subunit protein uS12 (147 aa).

It belongs to the universal ribosomal protein uS12 family. In terms of assembly, part of the 30S ribosomal subunit.

Its function is as follows. With S4 and S5 plays an important role in translational accuracy. Located at the interface of the 30S and 50S subunits. This is Small ribosomal subunit protein uS12 from Ignicoccus hospitalis (strain KIN4/I / DSM 18386 / JCM 14125).